We begin with the raw amino-acid sequence, 148 residues long: Small ribosomal subunit protein eS6 (148 aa).

Belongs to the eukaryotic ribosomal protein eS6 family.

The polypeptide is Small ribosomal subunit protein eS6 (Pyrobaculum neutrophilum (strain DSM 2338 / JCM 9278 / NBRC 100436 / V24Sta) (Thermoproteus neutrophilus)).